The primary structure comprises 122 residues: MPTINQLVRKPRKTPARINRVPALNKNPLKRGICSKVYTTTPKKPNSALRKVARVRLSGGAEVIAYIPGEGHNLQEHSVVCIRGGRVKDLPGVRYHIVRGVFDTEGVKGRKKGRSKYGAKKS.

D89 bears the 3-methylthioaspartic acid mark.

It belongs to the universal ribosomal protein uS12 family. As to quaternary structure, part of the 30S ribosomal subunit. Contacts proteins S8 and S17. May interact with IF1 in the 30S initiation complex.

In terms of biological role, with S4 and S5 plays an important role in translational accuracy. Functionally, interacts with and stabilizes bases of the 16S rRNA that are involved in tRNA selection in the A site and with the mRNA backbone. Located at the interface of the 30S and 50S subunits, it traverses the body of the 30S subunit contacting proteins on the other side and probably holding the rRNA structure together. The combined cluster of proteins S8, S12 and S17 appears to hold together the shoulder and platform of the 30S subunit. The chain is Small ribosomal subunit protein uS12 from Neorickettsia sennetsu (strain ATCC VR-367 / Miyayama) (Ehrlichia sennetsu).